A 377-amino-acid polypeptide reads, in one-letter code: Enoyl reductase cheB (377 aa).

An enoyl reductase (ER) domain region spans residues 18-361 (GGSLVIARDV…REISAEKLVV (344 aa)). An NADP(+)-binding site is contributed by 49-52 (CDFK). 137–144 (PCCIATMG) contributes to the substrate binding site. Residues 173-176 (SSSV), 200-203 (SPKN), Tyr218, 265-266 (LE), and Thr283 contribute to the NADP(+) site. 285–289 (GAIII) contributes to the substrate binding site. 354–355 (IS) serves as a coordination point for NADP(+).

It belongs to the zinc-containing alcohol dehydrogenase family. Heme is required as a cofactor.

It participates in secondary metabolite biosynthesis. In terms of biological role, enoyl reductase; part of the gene cluster that mediates the biosynthesis of chaetoglobosin A which has a unique inhibitory activity against actin polymerization in mammalian cells. Chaetoglobosin A and its intermediates are involved in the morphological differentiation of C.globosum. The first step of the pathway is the synthesis of prochaetoglobosin I via condensation of one acetyl-CoA, 8 malonyl-CoA, and a L-tryptophan molecule by the PKS-NRPS hybrid synthetase cheA, followed by reduction of backbone double bond to install desired geometry by the enoyl reductase cheB. Further multiple oxidation steps performed by the cytochrome P450 monooxygenases cheE and cheG, as well as by the FAD-linked oxidoreductase cheF, lead to the formation of chaetoglobosin A. Depending on the order of action of these reductases, distinct intermediates can be identified. Within the pathway, the cytochrome P450 monooxygenase cheE catalyzes a stereospecific epoxidation on prochaetoglobosin I, cytoglobosin D, and chaetoglobosin J intermediates. The FAD-linked oxidoreductase cheF performs dehydrogenation of the C-20 hydroxyl groups in the 20-dihyrochaetoglobosin A and cytoglobosin D intermediates. Finally, the cytochrome P450 monooxygenase cheG can catalyze the stereospecific dihydroxylation of prochaetoglobosin I and prochaetoglobosin IV at C-19 and C-20, respectively. The Diels-Alderase cheD may play a role in the post-PKS-NRPS biosynthetic steps catalyzing Diels-Alder cyclization. The sequence is that of Enoyl reductase cheB from Chaetomium globosum (strain ATCC 6205 / CBS 148.51 / DSM 1962 / NBRC 6347 / NRRL 1970) (Soil fungus).